A 216-amino-acid chain; its full sequence is Probable nicotinate-nucleotide adenylyltransferase (216 aa).

The protein belongs to the NadD family.

The catalysed reaction is nicotinate beta-D-ribonucleotide + ATP + H(+) = deamido-NAD(+) + diphosphate. The protein operates within cofactor biosynthesis; NAD(+) biosynthesis; deamido-NAD(+) from nicotinate D-ribonucleotide: step 1/1. Functionally, catalyzes the reversible adenylation of nicotinate mononucleotide (NaMN) to nicotinic acid adenine dinucleotide (NaAD). The polypeptide is Probable nicotinate-nucleotide adenylyltransferase (Pelobacter propionicus (strain DSM 2379 / NBRC 103807 / OttBd1)).